The primary structure comprises 293 residues: Cytidine deaminase 6 (293 aa).

2 CMP/dCMP-type deaminase domains span residues 16–147 (RGPS…FGPD) and 178–293 (EDCS…TNKN). 57–59 (NVE) contacts substrate. H70 serves as a coordination point for Zn(2+). Catalysis depends on E72, which acts as the Proton donor. Zn(2+)-binding residues include C103 and C106.

The protein belongs to the cytidine and deoxycytidylate deaminase family. As to quaternary structure, homodimer. Zn(2+) is required as a cofactor.

The enzyme catalyses cytidine + H2O + H(+) = uridine + NH4(+). The catalysed reaction is 2'-deoxycytidine + H2O + H(+) = 2'-deoxyuridine + NH4(+). In terms of biological role, this enzyme scavenges exogenous and endogenous cytidine and 2'-deoxycytidine for UMP synthesis. The polypeptide is Cytidine deaminase 6 (CDA6) (Arabidopsis thaliana (Mouse-ear cress)).